A 518-amino-acid chain; its full sequence is MVPTGQVAEKQACEEPRQDRELKSWRCLVFYLCFFGFMAQLRPGESFITPYLLQQNFTIEQVTNEIIPVLPYSHLAVLVPIFLLTDYLRYKPILILQCLSFMCVWLLLLLGTSVVHMQLMEVFYSVTMAARIAYSSYIFSLVRPSRYQRMASYSRAAVLLGVFTSSVLGQVLWPLEQKSQNSNMLNYISLGFIIFSLGLSLFLKRPKHSLFFNRSALVHKALPCELDQMHPGPGRPEPGKLERVLGSCRNSFLVCMLSELVGNLRQPQLRLWCLWWVFNSAGYYLIVYYVHVLWSIDKNLNYNGAVDAASTLLSAITSFSAGFVKIRWALWSKLVIASVIAIQAGLVFCMYMVHYVTWVHKIWVLYMTYVLFRGAYQFLVPIATFQIASSLSKELCALVFGINTFLATALKTAITLVVSDKRGLGLKVEKQFCIYSVYFMVLSVICFVGAVLDGVRYCRRGRHQPLPLPQELSPLENSVQVPSMQDGGLGGLQPSAPQLLPEDGVEDSEASLRAEAKA.

Methionine 1 carries the post-translational modification N-acetylmethionine. The Cytoplasmic segment spans residues 1–29 (MVPTGQVAEKQACEEPRQDRELKSWRCLV). A helical transmembrane segment spans residues 30-50 (FYLCFFGFMAQLRPGESFITP). Isoleucine 48 and threonine 49 together coordinate folate. Residues 51–62 (YLLQQNFTIEQV) lie on the Extracellular side of the membrane. Asparagine 56 is a glycosylation site (N-linked (GlcNAc...) asparagine). A helical membrane pass occupies residues 63–85 (TNEIIPVLPYSHLAVLVPIFLLT). Residues 86–89 (DYLR) are Cytoplasmic-facing. Residues 90-110 (YKPILILQCLSFMCVWLLLLL) traverse the membrane as a helical segment. Residues 111–114 (GTSV) lie on the Extracellular side of the membrane. A helical membrane pass occupies residues 115-137 (VHMQLMEVFYSVTMAARIAYSSY). Folate is bound by residues glutamate 121 and arginine 131. The Cytoplasmic segment spans residues 138-151 (IFSLVRPSRYQRMA). The chain crosses the membrane as a helical span at residues 152-176 (SYSRAAVLLGVFTSSVLGQVLWPLE). Valine 162 is a binding site for folate. Residues 177-181 (QKSQN) are Extracellular-facing. The chain crosses the membrane as a helical span at residues 182 to 200 (SNMLNYISLGFIIFSLGLS). The Cytoplasmic segment spans residues 201–266 (LFLKRPKHSL…LSELVGNLRQ (66 aa)). The chain crosses the membrane as a helical span at residues 267-292 (PQLRLWCLWWVFNSAGYYLIVYYVHV). Folate is bound by residues alanine 281, glycine 282, and isoleucine 286. Topologically, residues 293–300 (LWSIDKNL) are extracellular. Residues 301 to 323 (NYNGAVDAASTLLSAITSFSAGF) traverse the membrane as a helical segment. Over 324-329 (VKIRWA) the chain is Cytoplasmic. The chain crosses the membrane as a helical span at residues 330–350 (LWSKLVIASVIAIQAGLVFCM). Topologically, residues 351–353 (YMV) are extracellular. Residues 354-377 (HYVTWVHKIWVLYMTYVLFRGAYQ) traverse the membrane as a helical segment. Folate contacts are provided by tyrosine 366 and valine 370. Over 378–391 (FLVPIATFQIASSL) the chain is Cytoplasmic. A helical membrane pass occupies residues 392–415 (SKELCALVFGINTFLATALKTAIT). A required for substrate-binding region spans residues 407-419 (ATALKTAITLVVS). Over 416-423 (LVVSDKRG) the chain is Extracellular. Residues 424 to 448 (LGLKVEKQFCIYSVYFMVLSVICFV) form a helical membrane-spanning segment. Topologically, residues 449–512 (GAVLDGVRYC…DGVEDSEASL (64 aa)) are cytoplasmic. 3 positions are modified to phosphoserine: serine 473, serine 478, and serine 483. The interval 480–518 (QVPSMQDGGLGGLQPSAPQLLPEDGVEDSEASLRAEAKA) is disordered.

The protein belongs to the reduced folate carrier (RFC) transporter (TC 2.A.48) family.

Its subcellular location is the cell membrane. The protein localises to the apical cell membrane. It localises to the basolateral cell membrane. The catalysed reaction is 5-amino-1-(5-phospho-beta-D-ribosyl)imidazole-4-carboxamide(in) + (6S)-5-methyl-5,6,7,8-tetrahydrofolate(out) = 5-amino-1-(5-phospho-beta-D-ribosyl)imidazole-4-carboxamide(out) + (6S)-5-methyl-5,6,7,8-tetrahydrofolate(in). In terms of biological role, antiporter that mediates the import of reduced folates, driven by the export of organic anions. Also acts as an importer of immunoreactive cyclic dinucleotides, but with a lower transporter activity. Mechanistically, acts as a secondary active transporter, which exports intracellular organic anions down their concentration gradients to facilitate the uptake of its substrates. Has high affinity for N5-methyltetrahydrofolate, the predominant circulating form of folate. Also mediates the import of antifolate drug methotrexate. 5-amino-4-imidazolecarboxamide riboside (AICAR), when phosphorylated to AICAR monophosphate, can serve as an organic anion for antiporter activity. This chain is Reduced folate transporter, found in Cricetulus griseus (Chinese hamster).